Consider the following 520-residue polypeptide: Transactivator/viroplasmin protein (520 aa).

A disordered region spans residues 486 to 520 (VQDASADSGPKDGPPPTRSIVEKEDVPTTSSKQVD).

The protein belongs to the caulimoviridae viroplasmin family.

The protein localises to the host cytoplasm. In terms of biological role, enhances the ribosomal termination-reinitiation event leading to the translation of major open reading frames on the polycistronic viral RNAs. The sequence is that of Transactivator/viroplasmin protein from Cauliflower mosaic virus (strain BBC) (CaMV).